A 309-amino-acid chain; its full sequence is GTP cyclohydrolase MptA (309 aa).

This sequence belongs to the GTP cyclohydrolase IV family. As to quaternary structure, homodimer. It depends on Fe(2+) as a cofactor.

It carries out the reaction GTP + H2O = 7,8-dihydroneopterin 2',3'-cyclic phosphate + formate + diphosphate + H(+). It functions in the pathway cofactor biosynthesis; 5,6,7,8-tetrahydromethanopterin biosynthesis. In terms of biological role, converts GTP to 7,8-dihydro-D-neopterin 2',3'-cyclic phosphate, the first intermediate in the biosynthesis of coenzyme methanopterin. In Haloquadratum walsbyi (strain DSM 16790 / HBSQ001), this protein is GTP cyclohydrolase MptA.